The chain runs to 627 residues: DNA topoisomerase 4 subunit B (627 aa).

ATP is bound by residues Tyr-4, Asn-41, Asp-68, 109-115, and Lys-333; that span reads GLHGVGV. The Toprim domain maps to 412–525; the sequence is TELFIVEGDS…NGHIYIAQPP (114 aa). Mg(2+) contacts are provided by Glu-418, Asp-490, and Asp-492.

It belongs to the type II topoisomerase family. ParE type 1 subfamily. In terms of assembly, heterotetramer composed of ParC and ParE. It depends on Mg(2+) as a cofactor. Mn(2+) serves as cofactor. The cofactor is Ca(2+).

It catalyses the reaction ATP-dependent breakage, passage and rejoining of double-stranded DNA.. Pyrrolopyrimidines inhibit both GyrB and its paralog in topoisomerase IV (parE). Topoisomerase IV is essential for chromosome segregation. It relaxes supercoiled DNA. Performs the decatenation events required during the replication of a circular DNA molecule. This Francisella tularensis subsp. holarctica (strain LVS) protein is DNA topoisomerase 4 subunit B.